We begin with the raw amino-acid sequence, 378 residues long: Mannitol-1-phosphate 5-dehydrogenase (378 aa).

Ser-4–Gly-15 lines the NAD(+) pocket.

This sequence belongs to the mannitol dehydrogenase family.

The catalysed reaction is D-mannitol 1-phosphate + NAD(+) = beta-D-fructose 6-phosphate + NADH + H(+). The polypeptide is Mannitol-1-phosphate 5-dehydrogenase (Streptococcus pneumoniae serotype 4 (strain ATCC BAA-334 / TIGR4)).